Reading from the N-terminus, the 219-residue chain is Thiamine-phosphate synthase (219 aa).

Residues 44–48 (QFREK) and Asn79 contribute to the 4-amino-2-methyl-5-(diphosphooxymethyl)pyrimidine site. Residues Asp80 and Asp99 each coordinate Mg(2+). A 4-amino-2-methyl-5-(diphosphooxymethyl)pyrimidine-binding site is contributed by Ser117. 143–145 (TST) serves as a coordination point for 2-[(2R,5Z)-2-carboxy-4-methylthiazol-5(2H)-ylidene]ethyl phosphate. A 4-amino-2-methyl-5-(diphosphooxymethyl)pyrimidine-binding site is contributed by Lys146. 2-[(2R,5Z)-2-carboxy-4-methylthiazol-5(2H)-ylidene]ethyl phosphate-binding positions include Gly175 and 195 to 196 (IS).

It belongs to the thiamine-phosphate synthase family. It depends on Mg(2+) as a cofactor.

It catalyses the reaction 2-[(2R,5Z)-2-carboxy-4-methylthiazol-5(2H)-ylidene]ethyl phosphate + 4-amino-2-methyl-5-(diphosphooxymethyl)pyrimidine + 2 H(+) = thiamine phosphate + CO2 + diphosphate. It carries out the reaction 2-(2-carboxy-4-methylthiazol-5-yl)ethyl phosphate + 4-amino-2-methyl-5-(diphosphooxymethyl)pyrimidine + 2 H(+) = thiamine phosphate + CO2 + diphosphate. The catalysed reaction is 4-methyl-5-(2-phosphooxyethyl)-thiazole + 4-amino-2-methyl-5-(diphosphooxymethyl)pyrimidine + H(+) = thiamine phosphate + diphosphate. The protein operates within cofactor biosynthesis; thiamine diphosphate biosynthesis; thiamine phosphate from 4-amino-2-methyl-5-diphosphomethylpyrimidine and 4-methyl-5-(2-phosphoethyl)-thiazole: step 1/1. Its function is as follows. Condenses 4-methyl-5-(beta-hydroxyethyl)thiazole monophosphate (THZ-P) and 2-methyl-4-amino-5-hydroxymethyl pyrimidine pyrophosphate (HMP-PP) to form thiamine monophosphate (TMP). The polypeptide is Thiamine-phosphate synthase (Bacillus cereus (strain AH187)).